We begin with the raw amino-acid sequence, 248 residues long: Granzyme F (248 aa).

The signal sequence occupies residues 1-18 (MPPILILLTLLLPLRAGA). The propeptide occupies 19 to 20 (EE). In terms of domain architecture, Peptidase S1 spans 21–246 (IIGGHEVKPH…YLPWISRNMK (226 aa)). Cysteine 50 and cysteine 66 are disulfide-bonded. Catalysis depends on histidine 65, which acts as the Charge relay system. Asparagine 106 carries an N-linked (GlcNAc...) asparagine glycan. The active-site Charge relay system is the aspartate 109. Cystine bridges form between cysteine 143-cysteine 210 and cysteine 175-cysteine 189. Asparagine 154 carries an N-linked (GlcNAc...) asparagine glycan. The Charge relay system role is filled by serine 204. An N-linked (GlcNAc...) asparagine glycan is attached at asparagine 223.

The protein belongs to the peptidase S1 family. Granzyme subfamily.

The protein localises to the cytolytic granule. Its function is as follows. This enzyme is probably necessary for target cell lysis in cell-mediated immune responses. This Mus musculus (Mouse) protein is Granzyme F (Gzmf).